Here is a 391-residue protein sequence, read N- to C-terminus: Phosphoglycerate kinase (391 aa).

Substrate-binding positions include 21–23 (DLN), R36, 59–62 (HLGR), R113, and R146. Residues K197, E319, and 345–348 (GGDT) each bind ATP.

This sequence belongs to the phosphoglycerate kinase family. As to quaternary structure, monomer.

It localises to the cytoplasm. It carries out the reaction (2R)-3-phosphoglycerate + ATP = (2R)-3-phospho-glyceroyl phosphate + ADP. Its pathway is carbohydrate degradation; glycolysis; pyruvate from D-glyceraldehyde 3-phosphate: step 2/5. In Shewanella baltica (strain OS195), this protein is Phosphoglycerate kinase.